A 251-amino-acid chain; its full sequence is MRDAETQGLVLYSRNYKEKDKLVKIFTESFGKRMFFVKNFGKSPYASSLQAFTDGKLTATINDGGFSFIEDVSEVVVYKNISADIFINAHASYIISLADAAISDNQYDPALYGFLKRSLELLDQGFDMEVVTNIFELQVLHRFGVSLNFSECAFCHKTVGPFDFSYKFSGCLCPRHFDEDLRRSHLDPNVIYLINLFQEISLDELKKISIKAEMKAKIRQFIDGLYDEYVGIHLKSKKFLDGMSGWADIMK.

Belongs to the RecO family.

In terms of biological role, involved in DNA repair and RecF pathway recombination. The polypeptide is DNA repair protein RecO (Lactococcus lactis subsp. cremoris (strain MG1363)).